We begin with the raw amino-acid sequence, 106 residues long: DNA-directed RNA polymerase subunit omega (106 aa).

The disordered stretch occupies residues Arg76–Ala106. Over residues Glu92–Ala106 the composition is skewed to basic and acidic residues.

This sequence belongs to the RNA polymerase subunit omega family. In terms of assembly, the RNAP catalytic core consists of 2 alpha, 1 beta, 1 beta' and 1 omega subunit. When a sigma factor is associated with the core the holoenzyme is formed, which can initiate transcription.

The enzyme catalyses RNA(n) + a ribonucleoside 5'-triphosphate = RNA(n+1) + diphosphate. Functionally, promotes RNA polymerase assembly. Latches the N- and C-terminal regions of the beta' subunit thereby facilitating its interaction with the beta and alpha subunits. In Rubrobacter xylanophilus (strain DSM 9941 / JCM 11954 / NBRC 16129 / PRD-1), this protein is DNA-directed RNA polymerase subunit omega.